The sequence spans 298 residues: Diphthine methyl ester synthase (298 aa).

S-adenosyl-L-methionine-binding positions include Leu-9, Asp-85, Gly-88, 113–114, Leu-164, Leu-222, and His-247; that span reads SV.

It belongs to the diphthine synthase family.

The protein localises to the cytoplasm. The catalysed reaction is 2-[(3S)-amino-3-carboxypropyl]-L-histidyl-[translation elongation factor 2] + 4 S-adenosyl-L-methionine = diphthine methyl ester-[translation elongation factor 2] + 4 S-adenosyl-L-homocysteine + 3 H(+). It functions in the pathway protein modification; peptidyl-diphthamide biosynthesis. Its function is as follows. S-adenosyl-L-methionine-dependent methyltransferase that catalyzes four methylations of the modified target histidine residue in translation elongation factor 2 (EF-2), to form an intermediate called diphthine methyl ester. The four successive methylation reactions represent the second step of diphthamide biosynthesis. This is Diphthine methyl ester synthase (DPH5) from Eremothecium gossypii (strain ATCC 10895 / CBS 109.51 / FGSC 9923 / NRRL Y-1056) (Yeast).